Reading from the N-terminus, the 119-residue chain is Ubiquinone biosynthesis accessory factor UbiK (119 aa).

Residues 79–99 (LLRTREKLALLEQRLSELEAR) adopt a coiled-coil conformation. The segment covering 96-106 (LEARDKPEEVK) has biased composition (basic and acidic residues). A disordered region spans residues 96–119 (LEARDKPEEVKPAPAIPPVDPQQE). Residues 109 to 119 (PAIPPVDPQQE) are compositionally biased toward pro residues.

It belongs to the UbiK family. In terms of assembly, homotrimer.

It is found in the cytoplasm. It participates in cofactor biosynthesis; ubiquinone biosynthesis. Its function is as follows. Required for efficient ubiquinone (coenzyme Q) biosynthesis under aerobic conditions. UbiK is probably an accessory factor of Ubi enzymes and facilitates ubiquinone biosynthesis by acting as an assembly factor, a targeting factor, or both. Dispensable for ubiquinone biosynthesis under anaerobiosis. Required for proliferation in macrophages and virulence in mice. Significantly contributes to colonization and invasion as well as host inflammation and innate immunity after infection. In vitro, has membrane fusogenic activity at acidic pH. This chain is Ubiquinone biosynthesis accessory factor UbiK, found in Salmonella typhimurium (strain LT2 / SGSC1412 / ATCC 700720).